The sequence spans 377 residues: Beta-lactamase (377 aa).

The signal sequence occupies residues 1–19 (MFKTTLCALLITASCSTFA). Serine 80 (acyl-ester intermediate) is an active-site residue. Residues serine 80, glutamine 136, tyrosine 166, asparagine 168, alanine 334, and asparagine 359 each contribute to the a beta-lactam site.

This sequence belongs to the class-C beta-lactamase family. Monomer.

Its subcellular location is the periplasm. The enzyme catalyses a beta-lactam + H2O = a substituted beta-amino acid. With respect to regulation, inhibited by the beta-lactamase-blocking agents avibactam, enmetazobactam, relebactam, nacubactam, vaborbactam, taniborbactam, zidebactam, and beta-lactam-analog boronic acids, via a covalent binding to Ser-80. Inhibited by non-beta-lactam, benzo(b)thiophene-2-boronic acid (BZBTH2B) and various cyclic boronates. Not inhibited by clavulanic acid. Inhibited by O-aryloxycarbonyl hydroxamates, via cross-linking of the active site Ser-80 to Lys-331. Weakly inhibited by citric acid. Class C beta-lactamase which confers resistance to penicillins and cephalosporins. Has benzylpenicillin- and cephaloridine-hydrolyzing activity. Has weak cefuroxime, cefotaxime, cefoxitin and oxacillin-hydrolyzing activities. The sequence is that of Beta-lactamase from Escherichia coli (strain K12).